The chain runs to 2628 residues: Protein FMP27, mitochondrial (2628 aa).

The signal sequence occupies residues 1-28; the sequence is MMFPINVLLYKWLIFAVTFLWSCKILLR. Residues 29–192 are transmembrane domain; sequence KLLGINITWI…NTNLLIGEIM (164 aa). LRR repeat units follow at residues 160–182, 213–236, 271–296, 306–333, 571–596, 835–857, 1944–1967, 2101–2125, and 2303–2327; these read FDSF…IFIV, PMNL…KLLQ, IKPL…NHPE, YNVL…IFEE, NADI…LVHN, VVSL…IFGH, FDSL…FFIF, FFML…IFLK, and IGKL…ILRK.

It localises to the cell membrane. Its subcellular location is the endoplasmic reticulum membrane. It is found in the mitochondrion membrane. Its function is as follows. Tube-forming lipid transport protein which binds to phosphatidylinositols and affects phosphatidylinositol-4,5-bisphosphate (PtdIns-4,5-P2) distribution. In Saccharomyces cerevisiae (strain ATCC 204508 / S288c) (Baker's yeast), this protein is Protein FMP27, mitochondrial.